We begin with the raw amino-acid sequence, 150 residues long: Endoribonuclease YbeY (150 aa).

Residues H102, H106, and H112 each contribute to the Zn(2+) site.

Belongs to the endoribonuclease YbeY family. Requires Zn(2+) as cofactor.

The protein localises to the cytoplasm. Single strand-specific metallo-endoribonuclease involved in late-stage 70S ribosome quality control and in maturation of the 3' terminus of the 16S rRNA. The chain is Endoribonuclease YbeY from Thermotoga maritima (strain ATCC 43589 / DSM 3109 / JCM 10099 / NBRC 100826 / MSB8).